A 184-amino-acid chain; its full sequence is Protein Syd (184 aa).

This sequence belongs to the Syd family.

Its subcellular location is the cell inner membrane. Functionally, interacts with the SecY protein in vivo. May bind preferentially to an uncomplexed state of SecY, thus functioning either as a chelating agent for excess SecY in the cell or as a regulatory factor that negatively controls the translocase function. The protein is Protein Syd of Psychromonas ingrahamii (strain DSM 17664 / CCUG 51855 / 37).